A 345-amino-acid polypeptide reads, in one-letter code: UPF0284 protein STK_21430 (345 aa).

Belongs to the UPF0284 family.

The chain is UPF0284 protein STK_21430 from Sulfurisphaera tokodaii (strain DSM 16993 / JCM 10545 / NBRC 100140 / 7) (Sulfolobus tokodaii).